The sequence spans 405 residues: Putative polysaccharide ligase RT0347 (405 aa).

10 helical membrane-spanning segments follow: residues 23-43 (IAATVLFFLLIIVITELISFI), 77-97 (LFIAWCFISCLFTIHPINSLV), 120-140 (ILYLKNSLILGIITAILLFFI), 156-178 (FGLYMLDRGCALLSITTWVVIII), 201-221 (ISDSLASFVGFSIGGIIFILA), 227-247 (IFFKLITISLITGSLLFPIIA), 270-290 (LFIWHFVANKIIIKPILGYGF), 322-342 (ILQITLELGILGLALFLCLVY), 353-375 (ISNFRAASYSCFINYYIIGMISY), and 377-397 (IWQTWWILSGIWILVLMKLLV).

The protein belongs to the O-antigen ligase family.

It is found in the membrane. This Rickettsia typhi (strain ATCC VR-144 / Wilmington) protein is Putative polysaccharide ligase RT0347.